A 164-amino-acid polypeptide reads, in one-letter code: MGNAMKQLMASLALRELWQGMAVTLRYMFRPNITIQYPEERTPYSPRFRGIHVLRRYEGGEERCVACKLCEAICPAQAIYIEIDTESRADKRLTKVYDIDLFKCIYCGLCEEACPVEAIVMGPYLDMAYEDRNARFYKKDQLLANGESWRAEIDARLNADAKYR.

2 4Fe-4S ferredoxin-type domains span residues 55–84 and 95–124; these read RRYE…IEID and KVYD…MGPY. Residues Cys64, Cys67, Cys70, Cys74, Cys104, Cys107, Cys110, and Cys114 each contribute to the [4Fe-4S] cluster site.

The protein belongs to the complex I 23 kDa subunit family. In terms of assembly, NDH-1 is composed of 14 different subunits. Subunits NuoA, H, J, K, L, M, N constitute the membrane sector of the complex. The cofactor is [4Fe-4S] cluster.

The protein localises to the cell inner membrane. The enzyme catalyses a quinone + NADH + 5 H(+)(in) = a quinol + NAD(+) + 4 H(+)(out). Functionally, NDH-1 shuttles electrons from NADH, via FMN and iron-sulfur (Fe-S) centers, to quinones in the respiratory chain. The immediate electron acceptor for the enzyme in this species is believed to be ubiquinone. Couples the redox reaction to proton translocation (for every two electrons transferred, four hydrogen ions are translocated across the cytoplasmic membrane), and thus conserves the redox energy in a proton gradient. The sequence is that of NADH-quinone oxidoreductase subunit I from Magnetococcus marinus (strain ATCC BAA-1437 / JCM 17883 / MC-1).